Reading from the N-terminus, the 269-residue chain is MSQQNGNVNRVGAQDRVGASGGMEHSFGFKAVDENEKQGLVNDVFHKVAKRYDIMNDLMSAGMHRVWKDAMVAWLTPSKRPGWTSLDVAGGTGDIAFRIVEVSGRQAHVTILDINGSMLGVGRERAIKKGLIDNLEFVEANAEELPFEDNSFDAYTIAFGIRNVPHIDKALSEAYRVLKPGGRFLCLEFSEVELPVLDKVYDEWSFRAIPRIGKMITGDADSYSYLVESIRKFPKQQDFAAMIEKAGFERVSYRNFTGGIAALHSGWKL.

S-adenosyl-L-methionine is bound by residues T92, D113, and 141–142 (NA).

It belongs to the class I-like SAM-binding methyltransferase superfamily. MenG/UbiE family.

The catalysed reaction is a 2-demethylmenaquinol + S-adenosyl-L-methionine = a menaquinol + S-adenosyl-L-homocysteine + H(+). The enzyme catalyses a 2-methoxy-6-(all-trans-polyprenyl)benzene-1,4-diol + S-adenosyl-L-methionine = a 5-methoxy-2-methyl-3-(all-trans-polyprenyl)benzene-1,4-diol + S-adenosyl-L-homocysteine + H(+). The protein operates within quinol/quinone metabolism; menaquinone biosynthesis; menaquinol from 1,4-dihydroxy-2-naphthoate: step 2/2. It participates in cofactor biosynthesis; ubiquinone biosynthesis. Methyltransferase required for the conversion of demethylmenaquinol (DMKH2) to menaquinol (MKH2) and the conversion of 2-polyprenyl-6-methoxy-1,4-benzoquinol (DDMQH2) to 2-polyprenyl-3-methyl-6-methoxy-1,4-benzoquinol (DMQH2). The chain is Ubiquinone/menaquinone biosynthesis C-methyltransferase UbiE from Brucella suis biovar 1 (strain 1330).